A 211-amino-acid polypeptide reads, in one-letter code: Sec-independent protein translocase protein TatB (211 aa).

A helical transmembrane segment spans residues 1-21 (MFDIGVGELTLIAVVALVVLG). Residues 175 to 211 (AHLTSAPAPPVTVAPVDAGTSASPTPSEPTKIQEKQP) are disordered. Over residues 194-204 (TSASPTPSEPT) the composition is skewed to polar residues.

The protein belongs to the TatB family. In terms of assembly, the Tat system comprises two distinct complexes: a TatABC complex, containing multiple copies of TatA, TatB and TatC subunits, and a separate TatA complex, containing only TatA subunits. Substrates initially bind to the TatABC complex, which probably triggers association of the separate TatA complex to form the active translocon.

Its subcellular location is the cell inner membrane. Functionally, part of the twin-arginine translocation (Tat) system that transports large folded proteins containing a characteristic twin-arginine motif in their signal peptide across membranes. Together with TatC, TatB is part of a receptor directly interacting with Tat signal peptides. TatB may form an oligomeric binding site that transiently accommodates folded Tat precursor proteins before their translocation. This Xanthomonas oryzae pv. oryzae (strain MAFF 311018) protein is Sec-independent protein translocase protein TatB.